A 115-amino-acid polypeptide reads, in one-letter code: Large ribosomal subunit protein bL19 (115 aa).

Belongs to the bacterial ribosomal protein bL19 family.

Its function is as follows. This protein is located at the 30S-50S ribosomal subunit interface and may play a role in the structure and function of the aminoacyl-tRNA binding site. This Bacillus licheniformis (strain ATCC 14580 / DSM 13 / JCM 2505 / CCUG 7422 / NBRC 12200 / NCIMB 9375 / NCTC 10341 / NRRL NRS-1264 / Gibson 46) protein is Large ribosomal subunit protein bL19.